The primary structure comprises 249 residues: Small ribosomal subunit protein eS6 (249 aa).

Residues 216–229 (RMKEAKEKRQEQIA) are compositionally biased toward basic and acidic residues. The segment at 216-249 (RMKEAKEKRQEQIAKRRRLSSLRASTSKSESSQK) is disordered. Phosphoserine is present on residues S235, S236, S240, S244, and S247. Positions 236 to 249 (SLRASTSKSESSQK) are enriched in low complexity.

Belongs to the eukaryotic ribosomal protein eS6 family. As to quaternary structure, component of the small ribosomal subunit. In terms of processing, ribosomal protein S6 is the major substrate of protein kinases in eukaryote ribosomes. The phosphorylation is stimulated by growth factors, tumor promoting agents, and mitogens. It is dephosphorylated at growth arrest.

It localises to the cytoplasm. Its function is as follows. Component of the 40S small ribosomal subunit. Plays an important role in controlling cell growth and proliferation through the selective translation of particular classes of mRNA. This Oncorhynchus mykiss (Rainbow trout) protein is Small ribosomal subunit protein eS6 (rps6).